Reading from the N-terminus, the 224-residue chain is Orotidine 5'-phosphate decarboxylase (224 aa).

Substrate-binding positions include Asp-10, Lys-32, 59–68, Thr-115, Arg-175, Gln-184, Gly-204, and Arg-205; that span reads DLKLHDIPNT. The active-site Proton donor is Lys-61.

It belongs to the OMP decarboxylase family. Type 1 subfamily. Homodimer.

The enzyme catalyses orotidine 5'-phosphate + H(+) = UMP + CO2. It participates in pyrimidine metabolism; UMP biosynthesis via de novo pathway; UMP from orotate: step 2/2. Its function is as follows. Catalyzes the decarboxylation of orotidine 5'-monophosphate (OMP) to uridine 5'-monophosphate (UMP). The protein is Orotidine 5'-phosphate decarboxylase of Sphingopyxis alaskensis (strain DSM 13593 / LMG 18877 / RB2256) (Sphingomonas alaskensis).